Reading from the N-terminus, the 488-residue chain is Multidrug resistance outer membrane protein MdtP (488 aa).

Residues 1 to 23 (MINRQLSRLLLCSILGSTTLISG) form the signal peptide. Cysteine 24 carries N-palmitoyl cysteine lipidation. Cysteine 24 carries S-diacylglycerol cysteine lipidation.

It belongs to the outer membrane factor (OMF) (TC 1.B.17) family. In terms of assembly, could be part of a tripartite efflux system composed of MdtN, MdtO and MdtP.

The protein localises to the cell outer membrane. Functionally, could be involved in resistance to puromycin, acriflavine and tetraphenylarsonium chloride. This chain is Multidrug resistance outer membrane protein MdtP (mdtP), found in Escherichia coli (strain K12).